The following is a 289-amino-acid chain: tRNA pseudouridine synthase B (289 aa).

Asp38 (nucleophile) is an active-site residue.

It belongs to the pseudouridine synthase TruB family. Type 1 subfamily.

It catalyses the reaction uridine(55) in tRNA = pseudouridine(55) in tRNA. Functionally, responsible for synthesis of pseudouridine from uracil-55 in the psi GC loop of transfer RNAs. The sequence is that of tRNA pseudouridine synthase B from Clostridium kluyveri (strain ATCC 8527 / DSM 555 / NBRC 12016 / NCIMB 10680 / K1).